Reading from the N-terminus, the 273-residue chain is Urease accessory protein UreD (273 aa).

The tract at residues 1–29 (MLMRTATPLDQPRAIGSARVSSKRVNGGS) is disordered.

The protein belongs to the UreD family. UreD, UreF and UreG form a complex that acts as a GTP-hydrolysis-dependent molecular chaperone, activating the urease apoprotein by helping to assemble the nickel containing metallocenter of UreC. The UreE protein probably delivers the nickel.

It localises to the cytoplasm. In terms of biological role, required for maturation of urease via the functional incorporation of the urease nickel metallocenter. This Roseobacter denitrificans (strain ATCC 33942 / OCh 114) (Erythrobacter sp. (strain OCh 114)) protein is Urease accessory protein UreD.